The primary structure comprises 1710 residues: MALGSRWQPPPQLPPLLLLLALAAGVRGLEFGGGPGQWARYARWAGAASTGELSFSLRTNATRALLLYLDDGGDCDFLELLLVDGRLRLRFTLSCAEPATLQLDTPVADDRWHMVLLTRDARRTALAVDGEARAAEVRSKRREMQVASDLFVGGIPPDVRLSALTLSTVKYEPPFRGLLANLKLGERPPALLGSQGLRGAAADPLCAPARNPCANGGLCTVLAPGEVGCDCSHTGFGGKFCSEEEHPMEGPAHLTLNSEVGSLLFSEGGAGRGGAGDVHQPTKGKEEFVATFKGNEFFCYDLSHNPIQSSTDEITLAFRTLQRNGLMLHTGKSADYVNLSLKSGAVWLVINLGSGAFEALVEPVNGKFNDNAWHDVRVTRNLRQHAGIGHAMVNKLHYLVTISVDGILTTTGYTQEDYTMLGSDDFFYIGGSPNTADLPGSPVSNNFMGCLKDVVYKNNDFKLELSRLAKEGDPKMKLQGDLSFRCEDVAALDPVTFESPEAFVALPRWSAKRTGSISLDFRTTEPNGLLLFSQGRRAGAGVGSHSSTQRADYFAMELLDGYLYLLLDMGSGGIKLRASSRKVNDGEWCHVDFQRDGRKGSISVNSRSTPFLATGESEVLDLESELYLGGLPEGGRVDLPLPPEVWTAALRAGYVGCVRDLFIDGRSRDLRGLAEAQGAVGVAPFCSRETLKQCASAPCRNGGICREGWNRFVCDCIGTGFLGRVCEREATVLSYDGSMYMKIMLPTAMHTEAEDVSLRFMSQRAYGLMMATTSRESADTLRLELDGGQMRLTVNLDCLRVGCAPSKGPETLFAGHKLNDNEWHTVRVVRRGKSLQLSVDNVTVEGQMAGAHTRLEFHNIETGIMTERRFISVVPSNFIGHLSGLVFNGQPYMDQCKDGDITYCELNARFGLRAIVADPVTFKSRSSYLALATLQAYASMHLFFQFKTTAPDGLLLFNSGNGNDFIVIELVKGYIHYVFDLGNGPSLMKGNSDKPVNDNQWHNVVVSRDPGNVHTLKIDSRTVTQHSNGARNLDLKGELYIGGLSKNMFSNLPKLVASRDGFQGCLASVDLNGRLPDLIADALHRIGQVERGCDGPSTTCTEESCANQGVCLQQWDGFTCDCTMTSYGGPVCNDPGTTYIFGKGGALITYTWPPNDRPSTRMDRLAVGFSTHQRSAVLVRVDSASGLGDYLQLHIDQGTVGVIFNVGTDDITIDEPNAIVSDGKYHVVRFTRSGGNATLQVDSWPVNERYPAGNFDNERLAIARQRIPYRLGRVVDEWLLDKGRQLTIFNSQAAIKIGGRDQGRPFQGQVSGLYYNGLKVLALAAESDPNVRTEGHLRLVGEGPSVLLSAETTATTLLADMATTIMETTTTMATTTTRRGRSPTMRDSTTQNTDDLLVASAECPSDDEDLEECEPSTGGELILPIITEDSLDPPPVATRSPFVPPPPTFYPFLTGVGATQDTLPPPAARRPSSGGPCQAERDDSDCEEPVEASGFASGEVFDSSLPPTDDEDFYTTFPLVTDRTTLLSPRKPRPNLRTDGATGAPGVLFAPSAPAPNLPAGKMNHRDPLQPLLENPPLGPGVPTAFEPRRPPPLRPGVTSAPGFPRLPTANPTGPGERGPPGAVEVIRESSSTTGMVVGIVAAAALCILILLYAMYKYRNRDEGSYQVDQSRNYISNSAQSNGAVVKEKAPAAPKTPSKAKKNKDKEYYV.

The first 28 residues, Met-1–Gly-28, serve as a signal peptide directing secretion. In terms of domain architecture, Laminin G-like 1 spans Leu-29 to Cys-206. The Extracellular segment spans residues Leu-29 to Thr-1634. Asn-60 carries an N-linked (GlcNAc...) asparagine glycan. Positions Ala-202–Ser-242 constitute an EGF-like 1 domain. 3 cysteine pairs are disulfide-bonded: Cys-206/Cys-219, Cys-213/Cys-229, and Cys-231/Cys-241. 2 consecutive Laminin G-like domains span residues Val-289–Cys-486 and Asp-493–Cys-686. Asp-335 is a binding site for Ca(2+). Residue Asn-338 is glycosylated (N-linked (GlcNAc...) asparagine). Residues Leu-352 and Met-420 each contribute to the Ca(2+) site. Intrachain disulfides connect Cys-450–Cys-486, Cys-657–Cys-686, Cys-694–Cys-705, Cys-699–Cys-714, and Cys-716–Cys-726. Residues Thr-690 to Glu-727 form the EGF-like 2 domain. 2 Laminin G-like domains span residues Val-732–Cys-904 and Asp-918–Cys-1093. Asp-779 and Leu-796 together coordinate Ca(2+). An N-linked (GlcNAc...) asparagine glycan is attached at Asn-841. Arg-854 is a binding site for Ca(2+). 4 disulfides stabilise this stretch: Cys-1065-Cys-1093, Cys-1100-Cys-1111, Cys-1105-Cys-1120, and Cys-1122-Cys-1132. The 38-residue stretch at Pro-1096–Asn-1133 folds into the EGF-like 3 domain. The Laminin G-like 6 domain maps to Thr-1137–Ser-1345. Positions 1189, 1206, 1288, and 1290 each coordinate Ca(2+). A glycan (O-linked (Xyl...) (heparan sulfate) serine) is linked at Ser-1400. Disordered regions lie at residues Ala-1458–Thr-1508 and Glu-1587–Pro-1621. Residues Gly-1635–Met-1655 form a helical membrane-spanning segment. The Cytoplasmic portion of the chain corresponds to Tyr-1656–Val-1710. A disordered region spans residues Asn-1677 to Val-1710.

In terms of assembly, the laminin G-like domain 1 binds to NXPH1. Interacts with PATJ. Interacts with CBLN1, CBLN2 and, less avidly, with CBLN4. Specific isoforms bind neuroligins NLGN1, NLGN2 and NLGN3. Specific isoforms bind to alpha-dystroglycan. Interacts (via Laminin G-like 1 domain) with IGSF21 (Ig-like 1 domain) in a trans-interaction manner. Interacts with CLSTN3. In terms of processing, O-glycosylated; contains heparan sulfate. Heparan sulfate attachment is required for synapse development by mediating interactions with neuroligins.

It localises to the presynaptic cell membrane. Its function is as follows. Neuronal cell surface protein that may be involved in cell recognition and cell adhesion. May mediate intracellular signaling. The chain is Neurexin-2 from Mus musculus (Mouse).